A 657-amino-acid chain; its full sequence is Folic acid synthesis protein FOL1 (657 aa).

Residues 1-116 (MDKIIIKDLL…WPGVQIERTL (116 aa)) form a DHNA region. Positions 149 to 274 (YLAFGSNLGD…FVLLPLSDIA (126 aa)) are HPPK. One can recognise a Pterin-binding domain in the interval 333-641 (TFIMGILNVT…DIPEIRDAML (309 aa)). The tract at residues 335–657 (IMGILNVTPD…KPQRRYQIQK (323 aa)) is DHPS. Residue Asn-340 participates in Mg(2+) binding. (7,8-dihydropterin-6-yl)methyl diphosphate-binding residues include Thr-380, Asp-416, and Asn-435. The interval 466–524 (LNNSNDSNSNSSINTNGEDNNNNNNNNNNNNNNNNNNNNNNNNNDDNDNDNRSKIKQKI) is disordered. Positions 467-509 (NNSNDSNSNSSINTNGEDNNNNNNNNNNNNNNNNNNNNNNNNN) are enriched in low complexity. A compositionally biased stretch (basic and acidic residues) spans 514-524 (NDNRSKIKQKI). (7,8-dihydropterin-6-yl)methyl diphosphate contacts are provided by residues Asp-547, Lys-583, and 629-631 (RIH).

The protein in the N-terminal section; belongs to the DHNA family. This sequence in the central section; belongs to the HPPK family. It in the C-terminal section; belongs to the DHPS family. Mg(2+) is required as a cofactor.

The enzyme catalyses 7,8-dihydroneopterin = 6-hydroxymethyl-7,8-dihydropterin + glycolaldehyde. The catalysed reaction is 6-hydroxymethyl-7,8-dihydropterin + ATP = (7,8-dihydropterin-6-yl)methyl diphosphate + AMP + H(+). It carries out the reaction (7,8-dihydropterin-6-yl)methyl diphosphate + 4-aminobenzoate = 7,8-dihydropteroate + diphosphate. It functions in the pathway cofactor biosynthesis; tetrahydrofolate biosynthesis; 2-amino-4-hydroxy-6-hydroxymethyl-7,8-dihydropteridine diphosphate from 7,8-dihydroneopterin triphosphate: step 3/4. It participates in cofactor biosynthesis; tetrahydrofolate biosynthesis; 2-amino-4-hydroxy-6-hydroxymethyl-7,8-dihydropteridine diphosphate from 7,8-dihydroneopterin triphosphate: step 4/4. Its pathway is cofactor biosynthesis; tetrahydrofolate biosynthesis; 7,8-dihydrofolate from 2-amino-4-hydroxy-6-hydroxymethyl-7,8-dihydropteridine diphosphate and 4-aminobenzoate: step 1/2. Functionally, catalyzes three sequential steps of tetrahydrofolate biosynthesis. The sequence is that of Folic acid synthesis protein FOL1 (fol1) from Dictyostelium discoideum (Social amoeba).